The primary structure comprises 352 residues: Dead end protein homolog 1 (352 aa).

2 consecutive RRM domains span residues 58–136 (SEVY…RSTE) and 138–218 (CELT…WLKP). R336 carries the post-translational modification Omega-N-methylarginine.

Interacts with APOBEC3. In terms of tissue distribution, isoform 1 and isoform 2 are expressed in testis. Isoform 1 is expressed continuously in post natal (PN) testis although levels are low between PN1 to PN6. Isoform 2 is expressed from PN 20 onwards. Isoform 2 is strongly expressed in meiotic and in post-meiotic germ cells of the testis with highest expression at the elongated spermatid stage (at protein level). Expressed in testis and heart. Expressed in germ cells and genital ridges. Not detected in testicular tumors.

The protein resides in the nucleus. It localises to the cytoplasm. Its function is as follows. RNA-binding factor that positively regulates gene expression by prohibiting miRNA-mediated gene suppression. Relieves miRNA repression in germline cells. Prohibits the function of several miRNAs by blocking the accessibility of target mRNAs. Sequence-specific RNA-binding factor that binds specifically to U-rich regions (URRs) in the 3' untranslated region (3'-UTR) of several mRNAs. Does not bind to miRNAs. Isoform 1 may play a role during primordial germ cell (PGC) survival. However, does not seem to be essential for PGC migration. This Mus musculus (Mouse) protein is Dead end protein homolog 1 (Dnd1).